The sequence spans 319 residues: Ribonucleoside-diphosphate reductase 2 subunit beta (319 aa).

The Fe cation site is built by Asp-67, Glu-98, and His-101. Residue Tyr-105 is part of the active site. Fe cation contacts are provided by Glu-158, Glu-192, and His-195.

Belongs to the ribonucleoside diphosphate reductase small chain family. As to quaternary structure, tetramer of two alpha and two beta subunits. Requires Fe cation as cofactor.

The enzyme catalyses a 2'-deoxyribonucleoside 5'-diphosphate + [thioredoxin]-disulfide + H2O = a ribonucleoside 5'-diphosphate + [thioredoxin]-dithiol. Provides the precursors necessary for DNA synthesis. Catalyzes the biosynthesis of deoxyribonucleotides from the corresponding ribonucleotides. R2F contains the tyrosyl radical required for catalysis. This chain is Ribonucleoside-diphosphate reductase 2 subunit beta (nrdF), found in Escherichia coli (strain K12).